The primary structure comprises 400 residues: MAKQKFERTKPHVNVGTIGHVDHGKTTLTAAITLILSKAGLAQAKGYDEIDKAPEEKARGITINTTHVEYETAKRHYAHVDCPGHADYVKNMITGAAQMDGAILVVSAADGPMPQTREHILLARQVGVPYIVVFLNKADMVDDPELIELVEMEVRDLLNQYEFPGDETPIVVGSALKALECGCGKRECQWCGKIWELMDVVDEYIPTPERDIDKPFLMPVEDVFSITGRGTVATGRVERGKVKVGDEVEIIGLTTESRKTVVTGVEMFRKTLDEAQAGDNIGVLLRGIQKDEVERGQVLAKPGTIKPHTKFEAQVYVLTKEEGGRHTPFFNGYRPQFYFRTTDVTGTIQLPEGVEMVMPGDHVTLRVELITPIAMEEGLKFAIREGGRTVGAGVVSAIIE.

Positions 10 to 209 constitute a tr-type G domain; it reads KPHVNVGTIG…VVDEYIPTPE (200 aa). The tract at residues 19 to 26 is G1; it reads GHVDHGKT. 19–26 contributes to the GTP binding site; it reads GHVDHGKT. T26 contacts Mg(2+). The segment at 60–64 is G2; it reads GITIN. The segment at 81 to 84 is G3; the sequence is DCPG. GTP is bound by residues 81–85 and 136–139; these read DCPGH and NKAD. The G4 stretch occupies residues 136-139; that stretch reads NKAD. Positions 174–176 are G5; sequence SAL.

It belongs to the TRAFAC class translation factor GTPase superfamily. Classic translation factor GTPase family. EF-Tu/EF-1A subfamily. In terms of assembly, monomer.

Its subcellular location is the cytoplasm. It carries out the reaction GTP + H2O = GDP + phosphate + H(+). GTP hydrolase that promotes the GTP-dependent binding of aminoacyl-tRNA to the A-site of ribosomes during protein biosynthesis. This Caldanaerobacter subterraneus subsp. tengcongensis (strain DSM 15242 / JCM 11007 / NBRC 100824 / MB4) (Thermoanaerobacter tengcongensis) protein is Elongation factor Tu-B.